A 502-amino-acid polypeptide reads, in one-letter code: Chlorophyllide reductase 52.5 kDa chain (502 aa).

A run of 3 helical transmembrane segments spans residues 70–87, 131–147, and 221–238; these read VGTIISGSACCTYGLSFV, AIVVTNLCVPTASGVPL, and VMIGALLAPLGLAAGPVV.

The protein belongs to the BchN/ChlN family. As to quaternary structure, chlorophyllide reductase is composed of three subunits; BchX, BchY and BchZ. Forms a heterodimer of one BchY and one BchZ subunit.

Its subcellular location is the cell membrane. The catalysed reaction is 3-deacetyl-3-vinylbacteriochlorophyllide a + 2 oxidized [2Fe-2S]-[ferredoxin] + ADP + phosphate = chlorophyllide a + 2 reduced [2Fe-2S]-[ferredoxin] + ATP + H2O + H(+). It carries out the reaction bacteriochlorophyllide a + 2 oxidized [2Fe-2S]-[ferredoxin] + ADP + phosphate = 3-acetyl-3-devinylchlorophyllide a + 2 reduced [2Fe-2S]-[ferredoxin] + ATP + H2O + H(+). It catalyses the reaction 3-deacetyl-3-(1-hydroxyethyl)bacteriochlorophyllide a + 2 oxidized [2Fe-2S]-[ferredoxin] + ADP + phosphate = 3-devinyl-3-(1-hydroxyethyl)chlorophyllide a + 2 reduced [2Fe-2S]-[ferredoxin] + ATP + H2O + H(+). It participates in porphyrin-containing compound metabolism; bacteriochlorophyll biosynthesis (light-independent). Converts chlorophylls (Chl) into bacteriochlorophylls (BChl) by reducing ring B of the tetrapyrrole. The sequence is that of Chlorophyllide reductase 52.5 kDa chain (bchY) from Cereibacter sphaeroides (strain ATCC 17023 / DSM 158 / JCM 6121 / CCUG 31486 / LMG 2827 / NBRC 12203 / NCIMB 8253 / ATH 2.4.1.) (Rhodobacter sphaeroides).